The chain runs to 332 residues: Methylthioribose-1-phosphate isomerase (332 aa).

Residues 44-46 (RGA), Arg-87, and Gln-192 contribute to the substrate site. Catalysis depends on Asp-233, which acts as the Proton donor. 243–244 (NK) provides a ligand contact to substrate.

The protein belongs to the eIF-2B alpha/beta/delta subunits family. MtnA subfamily.

The enzyme catalyses 5-(methylsulfanyl)-alpha-D-ribose 1-phosphate = 5-(methylsulfanyl)-D-ribulose 1-phosphate. It functions in the pathway amino-acid biosynthesis; L-methionine biosynthesis via salvage pathway; L-methionine from S-methyl-5-thio-alpha-D-ribose 1-phosphate: step 1/6. In terms of biological role, catalyzes the interconversion of methylthioribose-1-phosphate (MTR-1-P) into methylthioribulose-1-phosphate (MTRu-1-P). This is Methylthioribose-1-phosphate isomerase from Dehalococcoides mccartyi (strain ATCC BAA-2100 / JCM 16839 / KCTC 5957 / BAV1).